A 405-amino-acid polypeptide reads, in one-letter code: MILRRLVLSATSNSNPRRSQSLSSSGVRILSSSSSDRYTSSSQRYSGDDRLARLRHKDWLAPNEVLKIFDNVKDPSFLLPAYQHYSKRKDYQPTESLYALMINKFGQAKMYDEIEEVMRTIKLEKRCRFSEEFFYNLMRIYGNLAGRINRAIEILFGMPDFGCWPSSKSFNFILNLLVSAKLFDEIHKIFVSAPKLGVEIDACCLNILIKGLCESGNLEAALQLLDEFPQQKSRPNVMTFSPLIRGFCNKGKFEEAFKLLERMEKERIEPDTITFNILISGLRKKGRVEEGIDLLERMKVKGCEPNPGTYQEVLYGLLDKKRNLEAKEMMSQMISWGMRPSFLSYKKMVLGLCETKSVVEMDWVLRQMVNHGFVPKTLMWWKVVQCVVSKNNDDSQANLDRITAC.

A mitochondrion-targeting transit peptide spans 1-37 (MILRRLVLSATSNSNPRRSQSLSSSGVRILSSSSSDR). The interval 13 to 44 (NSNPRRSQSLSSSGVRILSSSSSDRYTSSSQR) is disordered. PPR repeat units follow at residues 94-124 (TESL…IKLE), 130-165 (SEEF…GCWP), 166-200 (SSKS…GVEI), 201-235 (DACC…KSRP), 236-270 (NVMT…RIEP), 271-305 (DTIT…GCEP), 306-340 (NPGT…GMRP), and 341-375 (SFLS…GFVP).

It belongs to the PPR family. P subfamily.

It localises to the mitochondrion. This chain is Pentatricopeptide repeat-containing protein At3g14580, mitochondrial, found in Arabidopsis thaliana (Mouse-ear cress).